The sequence spans 390 residues: MKFIDEALIRVEAGDGGNGCVSFRREKYIPKGGPDGGDGGDGGDVYLVADENLNTLIDYRFEKRFAAGRGENGRSAGCTGHRGNDITLRVPVGTRAIDNDTKEVLGDLTKHGAKMLVAKGGYHGLGNTRFKSSVNRAPRQKTNGTPGEKRDLQLELMLLADVGMLGLPNAGKSTFIRAVSAAKPKVADYPFTTLVPSLGVVRVDENHSFVVADIPGLIEGAAEGAGLGVRFLKHLERCRVLIHLVDIAPIDESDPAENISIIESELFQYSEALADKPRWLVFNKIDTMSDEEAHERAQAITERLGWDDDYYLISAVTGKNVQPLCRDIMDFIEANPRHEVEQTADEAEVKFKWDDYHQAQLADHQFEDEDEDWDDWSEEDEEGVETIYKP.

In terms of domain architecture, Obg spans methionine 1–leucine 159. The 174-residue stretch at alanine 160–glutamate 333 folds into the OBG-type G domain. GTP is bound by residues glycine 166–serine 173, phenylalanine 191–valine 195, aspartate 213–glycine 216, asparagine 283–aspartate 286, and serine 314–valine 316. 2 residues coordinate Mg(2+): serine 173 and threonine 193. The tract at residues aspartate 363–proline 390 is disordered. Residues phenylalanine 366–valine 384 show a composition bias toward acidic residues.

This sequence belongs to the TRAFAC class OBG-HflX-like GTPase superfamily. OBG GTPase family. In terms of assembly, monomer. Mg(2+) is required as a cofactor.

It localises to the cytoplasm. Functionally, an essential GTPase which binds GTP, GDP and possibly (p)ppGpp with moderate affinity, with high nucleotide exchange rates and a fairly low GTP hydrolysis rate. Plays a role in control of the cell cycle, stress response, ribosome biogenesis and in those bacteria that undergo differentiation, in morphogenesis control. The polypeptide is GTPase Obg (Pasteurella multocida (strain Pm70)).